A 43-amino-acid chain; its full sequence is Protein PsbN (43 aa).

The helical transmembrane segment at 5–25 (LILSIFIFSLLLGITSYSIYI) threads the bilayer.

The protein belongs to the PsbN family.

It is found in the plastid. The protein localises to the chloroplast thylakoid membrane. In terms of biological role, may play a role in photosystem I and II biogenesis. In Cyanidium caldarium (Red alga), this protein is Protein PsbN.